The following is a 463-amino-acid chain: Fumarate hydratase class II (463 aa).

Substrate contacts are provided by residues S97 to T99, H128 to D131, S138 to N140, and T186. Catalysis depends on H187, which acts as the Proton donor/acceptor. S317 is a catalytic residue. Substrate contacts are provided by residues S318 and K323–N325.

Belongs to the class-II fumarase/aspartase family. Fumarase subfamily. Homotetramer.

The protein localises to the cytoplasm. It carries out the reaction (S)-malate = fumarate + H2O. It participates in carbohydrate metabolism; tricarboxylic acid cycle; (S)-malate from fumarate: step 1/1. In terms of biological role, involved in the TCA cycle. Catalyzes the stereospecific interconversion of fumarate to L-malate. This Campylobacter jejuni subsp. jejuni serotype O:2 (strain ATCC 700819 / NCTC 11168) protein is Fumarate hydratase class II.